The sequence spans 139 residues: Gene 39 protein (139 aa).

The protein is Gene 39 protein (39) of Mycobacterium (Mycobacteriophage L5).